A 294-amino-acid chain; its full sequence is MALTGTDRVKRGMAEMQKGGVIMDVVNAEQAKIAEAAGAVAVMALERVPADIRAAGGVARMADPTVVEEVMNAVSIPVMAKVRIGHYVEARVLEALGVDYIDESEVLTPADEEFHIDKRQFTVPFVCGCRDLGEAARRIAEGASMLRTKGEPGTGNIVEAVRHMRKVNAQIRKVVSMSEDELVAEAKQLGAPVEVLREIKRIGRLPVVNFAAGGVATPADAALMMHLGADGVFVGSGIFKSENPEKYARAIVEATTHYEDYELIAHLSKGLGGAMRGIDVATLLPEHRMQERGW.

Asp-24 provides a ligand contact to D-ribose 5-phosphate. Lys-81 (schiff-base intermediate with D-ribose 5-phosphate) is an active-site residue. A D-ribose 5-phosphate-binding site is contributed by Gly-153. Residue Arg-165 coordinates D-glyceraldehyde 3-phosphate. Residues Gly-214 and 235–236 contribute to the D-ribose 5-phosphate site; that span reads GS.

It belongs to the PdxS/SNZ family. In terms of assembly, in the presence of PdxT, forms a dodecamer of heterodimers.

It catalyses the reaction aldehydo-D-ribose 5-phosphate + D-glyceraldehyde 3-phosphate + L-glutamine = pyridoxal 5'-phosphate + L-glutamate + phosphate + 3 H2O + H(+). It functions in the pathway cofactor biosynthesis; pyridoxal 5'-phosphate biosynthesis. Functionally, catalyzes the formation of pyridoxal 5'-phosphate from ribose 5-phosphate (RBP), glyceraldehyde 3-phosphate (G3P) and ammonia. The ammonia is provided by the PdxT subunit. Can also use ribulose 5-phosphate and dihydroxyacetone phosphate as substrates, resulting from enzyme-catalyzed isomerization of RBP and G3P, respectively. In Geobacillus thermodenitrificans (strain NG80-2), this protein is Pyridoxal 5'-phosphate synthase subunit PdxS.